A 114-amino-acid chain; its full sequence is Probable 4-amino-4-deoxy-L-arabinose-phosphoundecaprenol flippase subunit ArnE (114 aa).

A run of 3 helical transmembrane segments spans residues 41 to 61, 64 to 84, and 94 to 114; these read PWLI…IYLL, LPLS…LVGS, and YHNW…GGLL. One can recognise an EamA domain in the interval 43 to 112; it reads LIASVAALGC…IIVGALLLGG (70 aa).

Belongs to the ArnE family. As to quaternary structure, heterodimer of ArnE and ArnF.

It localises to the cell inner membrane. It functions in the pathway bacterial outer membrane biogenesis; lipopolysaccharide biosynthesis. Functionally, translocates 4-amino-4-deoxy-L-arabinose-phosphoundecaprenol (alpha-L-Ara4N-phosphoundecaprenol) from the cytoplasmic to the periplasmic side of the inner membrane. The protein is Probable 4-amino-4-deoxy-L-arabinose-phosphoundecaprenol flippase subunit ArnE of Aeromonas hydrophila subsp. hydrophila (strain ATCC 7966 / DSM 30187 / BCRC 13018 / CCUG 14551 / JCM 1027 / KCTC 2358 / NCIMB 9240 / NCTC 8049).